Here is a 222-residue protein sequence, read N- to C-terminus: LHFPL tetraspan subfamily member 3 protein (222 aa).

Helical transmembrane passes span 22–42 (IGVL…VCFI), 96–116 (FFIG…TLFF), 126–146 (ICAW…MIFP), and 177–197 (ILAI…VVLG).

This sequence belongs to the LHFP family. In terms of tissue distribution, brain-specific.

It localises to the membrane. The sequence is that of LHFPL tetraspan subfamily member 3 protein from Mus musculus (Mouse).